The primary structure comprises 276 residues: Src-like-adapter (276 aa).

A lipid anchor (N-myristoyl glycine) is attached at Gly2. One can recognise an SH3 domain in the interval 22-82 (LDSDFLAVLS…PGICVARVYH (61 aa)). The region spanning 84–175 (WLFEGLGRDK…GLCCVLTTPC (92 aa)) is the SH2 domain. The SLA C-terminal stretch occupies residues 212 to 276 (EGTENPLGVD…FFSSPPYFED (65 aa)). Ser253 bears the Phosphoserine mark. A Phosphotyrosine modification is found at Tyr273.

As to quaternary structure, interacts with EPHA2, VAV1, LCP2 and PDGFRB. Homodimer. Homodimerization and interaction with phosphorylated CBL occurs via its C-terminal domain. Interacts with phosphorylated proteins ZAP70, CD3Z, SYK and LAT via its SH2 domain. In terms of tissue distribution, expressed in lung and fetal brain. Weakly expressed in heart, adult brain, placenta, liver, skeletal muscle, kidney and pancreas.

Its subcellular location is the cytoplasm. It is found in the endosome. Adapter protein, which negatively regulates T-cell receptor (TCR) signaling. Inhibits T-cell antigen-receptor induced activation of nuclear factor of activated T-cells. Involved in the negative regulation of positive selection and mitosis of T-cells. May act by linking signaling proteins such as ZAP70 with CBL, leading to a CBL dependent degradation of signaling proteins. This chain is Src-like-adapter (SLA), found in Homo sapiens (Human).